We begin with the raw amino-acid sequence, 859 residues long: Protein EFR3 homolog (859 aa).

The segment covering 696-714 (RKNDGSGDQWQNDTPNFDS) has biased composition (polar residues). The interval 696 to 728 (RKNDGSGDQWQNDTPNFDSTDGRESPSGYKTVG) is disordered.

The protein belongs to the EFR3 family.

This Caenorhabditis elegans protein is Protein EFR3 homolog.